Reading from the N-terminus, the 673-residue chain is Elongation factor G 1 (673 aa).

Positions 3-277 (KELRNIGIIA…SIVDYLPSPL (275 aa)) constitute a tr-type G domain. GTP-binding positions include 12-19 (AHIDAGKT), 76-80 (DTPGH), and 130-133 (NKMD).

Belongs to the TRAFAC class translation factor GTPase superfamily. Classic translation factor GTPase family. EF-G/EF-2 subfamily.

It localises to the cytoplasm. Catalyzes the GTP-dependent ribosomal translocation step during translation elongation. During this step, the ribosome changes from the pre-translocational (PRE) to the post-translocational (POST) state as the newly formed A-site-bound peptidyl-tRNA and P-site-bound deacylated tRNA move to the P and E sites, respectively. Catalyzes the coordinated movement of the two tRNA molecules, the mRNA and conformational changes in the ribosome. The chain is Elongation factor G 1 from Syntrophomonas wolfei subsp. wolfei (strain DSM 2245B / Goettingen).